The following is a 364-amino-acid chain: Paraneoplastic antigen Ma2 homolog (364 aa).

A2 is modified (N-acetylalanine). Residues 335 to 353 (EEEEASFENESIEEPEEGD) show a composition bias toward acidic residues. The interval 335 to 364 (EEEEASFENESIEEPEEGDGYGGWNHEGDD) is disordered. Residues 354–364 (GYGGWNHEGDD) are compositionally biased toward gly residues.

It belongs to the PNMA family.

It is found in the nucleus. The protein resides in the nucleolus. The chain is Paraneoplastic antigen Ma2 homolog (PNMA2) from Macaca fascicularis (Crab-eating macaque).